The following is a 206-amino-acid chain: Small ribosomal subunit protein uS4 (206 aa).

The S4 RNA-binding domain occupies 98 to 163; it reads MRLDNVVYRL…SEKFKTFVEN (66 aa).

It belongs to the universal ribosomal protein uS4 family. Part of the 30S ribosomal subunit. Contacts protein S5. The interaction surface between S4 and S5 is involved in control of translational fidelity.

Its function is as follows. One of the primary rRNA binding proteins, it binds directly to 16S rRNA where it nucleates assembly of the body of the 30S subunit. In terms of biological role, with S5 and S12 plays an important role in translational accuracy. The sequence is that of Small ribosomal subunit protein uS4 from Clostridium botulinum (strain Alaska E43 / Type E3).